The sequence spans 422 residues: Enolase (422 aa).

Gln162 contacts (2R)-2-phosphoglycerate. The active-site Proton donor is the Glu204. Asp241, Glu285, and Asp312 together coordinate Mg(2+). Residues Lys337, Arg366, Ser367, and Lys388 each coordinate (2R)-2-phosphoglycerate. Lys337 (proton acceptor) is an active-site residue.

Belongs to the enolase family. It depends on Mg(2+) as a cofactor.

The protein localises to the cytoplasm. Its subcellular location is the secreted. It is found in the cell surface. It carries out the reaction (2R)-2-phosphoglycerate = phosphoenolpyruvate + H2O. Its pathway is carbohydrate degradation; glycolysis; pyruvate from D-glyceraldehyde 3-phosphate: step 4/5. Its function is as follows. Catalyzes the reversible conversion of 2-phosphoglycerate (2-PG) into phosphoenolpyruvate (PEP). It is essential for the degradation of carbohydrates via glycolysis. This is Enolase from Wolinella succinogenes (strain ATCC 29543 / DSM 1740 / CCUG 13145 / JCM 31913 / LMG 7466 / NCTC 11488 / FDC 602W) (Vibrio succinogenes).